Here is an 874-residue protein sequence, read N- to C-terminus: Coatomer subunit gamma-1 (874 aa).

Residues methionine 1–glutamate 11 are compositionally biased toward basic and acidic residues. Residues methionine 1–histidine 21 are disordered. 4 HEAT repeats span residues threonine 64–aspartate 101, lysine 283–serine 320, valine 322–glycine 355, and serine 356–arginine 392. Threonine 594 is modified (phosphothreonine). The segment at arginine 609 to glycine 874 is interaction with ZNF289/ARFGAP2.

Belongs to the COPG family. As to quaternary structure, oligomeric complex that consists of at least the alpha, beta, beta', gamma, delta, epsilon and zeta subunits. Interacts with ZNF289/ARFGAP2 through its C-terminal appendage domain. Interacts with EGFR upon EGF treatment; interaction is essential for regulation of EGF-dependent nuclear transport of EGFR by retrograde trafficking from the Golgi to the ER. The coatomer interacts with KDEL receptors; the interaction is important for retrograde trafficking of KDEL-bearing proteins from the Golgi to the endoplasmic reticulum. Interacts with COPB1. Interacts with TMED10 (via C-terminus). Interacts with TMED2, TMED3, TMED7 and TMED9.

It is found in the cytoplasm. The protein localises to the cytosol. The protein resides in the golgi apparatus membrane. Its subcellular location is the cytoplasmic vesicle. It localises to the COPI-coated vesicle membrane. Its function is as follows. The coatomer is a cytosolic protein complex that binds to dilysine motifs and reversibly associates with Golgi non-clathrin-coated vesicles, which further mediate biosynthetic protein transport from the ER, via the Golgi up to the trans Golgi network. Coatomer complex is required for budding from Golgi membranes, and is essential for the retrograde Golgi-to-ER transport of dilysine-tagged proteins. In mammals, the coatomer can only be recruited by membranes associated to ADP-ribosylation factors (ARFs), which are small GTP-binding proteins; the complex also influences the Golgi structural integrity, as well as the processing, activity, and endocytic recycling of LDL receptors. Required for limiting lipid storage in lipid droplets. Involved in lipid homeostasis by regulating the presence of perilipin family members PLIN2 and PLIN3 at the lipid droplet surface and promoting the association of adipocyte triglyceride lipase (PNPLA2) with the lipid droplet surface to mediate lipolysis. The chain is Coatomer subunit gamma-1 (COPG1) from Bos taurus (Bovine).